The chain runs to 397 residues: Iron-sulfur cluster assembly SufBD family protein Rv1462 (397 aa).

Thr-2 is modified (N-acetylthreonine).

Belongs to the iron-sulfur cluster assembly SufBD family.

This Mycobacterium tuberculosis (strain ATCC 25618 / H37Rv) protein is Iron-sulfur cluster assembly SufBD family protein Rv1462.